Here is a 297-residue protein sequence, read N- to C-terminus: ER membrane protein complex subunit 2 (297 aa).

The residue at position 2 (Ala-2) is an N-acetylalanine. TPR repeat units lie at residues His-87–Asn-120, Gln-155–Asn-188, and Cys-192–Asn-225. Lys-255 bears the N6-acetyllysine mark.

It belongs to the EMC2 family. Component of the ER membrane protein complex (EMC). Interacts with WNK1 (via amphipathic alpha-helix region); promoting the ER membrane protein complex assembly by preventing EMC2 ubiquitination. Post-translationally, ubiquitinated when soluble in the cytoplasm, leading to its degradation by the proteasome. Interaction with EMC2 prevents its ubiquitination and degradation.

Its subcellular location is the endoplasmic reticulum membrane. Functionally, part of the endoplasmic reticulum membrane protein complex (EMC) that enables the energy-independent insertion into endoplasmic reticulum membranes of newly synthesized membrane proteins. Preferentially accommodates proteins with transmembrane domains that are weakly hydrophobic or contain destabilizing features such as charged and aromatic residues. Involved in the cotranslational insertion of multi-pass membrane proteins in which stop-transfer membrane-anchor sequences become ER membrane spanning helices. It is also required for the post-translational insertion of tail-anchored/TA proteins in endoplasmic reticulum membranes. By mediating the proper cotranslational insertion of N-terminal transmembrane domains in an N-exo topology, with translocated N-terminus in the lumen of the ER, controls the topology of multi-pass membrane proteins like the G protein-coupled receptors. By regulating the insertion of various proteins in membranes, it is indirectly involved in many cellular processes. In Pongo abelii (Sumatran orangutan), this protein is ER membrane protein complex subunit 2.